We begin with the raw amino-acid sequence, 299 residues long: Elongation factor Ts, mitochondrial (299 aa).

A mitochondrion-targeting transit peptide spans 1 to 18; the sequence is MLFQRRLHFHQFFGKTRV.

Belongs to the EF-Ts family.

It localises to the mitochondrion. Associates with the EF-Tu.GDP complex and induces the exchange of GDP to GTP. It remains bound to the aminoacyl-tRNA.EF-Tu.GTP complex up to the GTP hydrolysis stage on the ribosome. This chain is Elongation factor Ts, mitochondrial (tsf1), found in Schizosaccharomyces pombe (strain 972 / ATCC 24843) (Fission yeast).